Reading from the N-terminus, the 568-residue chain is Sulfate adenylyltransferase (568 aa).

The interval 1–162 (MANSPHGGVL…IEAVNKLNHY (162 aa)) is N-terminal. Residues 163 to 388 (DYVALRYSPA…LRESSPPRAT (226 aa)) form a catalytic region. Glutamine 190 serves as a coordination point for sulfate. Residues 190 to 193 (QTRN) and 284 to 287 (GRDH) each bind ATP. Catalysis depends on residues threonine 191, arginine 192, and asparagine 193. A sulfate-binding site is contributed by arginine 192. Residue alanine 288 participates in sulfate binding. Valine 326 is a binding site for ATP. The tract at residues 389-568 (QGFTIFLTGY…LESEGYFDRL (180 aa)) is allosteric regulation domain; adenylyl-sulfate kinase-like. 3'-phosphoadenylyl sulfate contacts are provided by residues 428 to 431 (DTVR), arginine 445, 471 to 472 (IA), and arginine 510.

In the N-terminal section; belongs to the sulfate adenylyltransferase family. It in the C-terminal section; belongs to the APS kinase family. As to quaternary structure, homohexamer. Dimer of trimers.

The protein localises to the cytoplasm. It carries out the reaction sulfate + ATP + H(+) = adenosine 5'-phosphosulfate + diphosphate. Its pathway is sulfur metabolism; hydrogen sulfide biosynthesis; sulfite from sulfate: step 1/3. With respect to regulation, allosterically inhibited by 3'-phosphoadenosine 5'-phosphosulfate (PAPS). Its function is as follows. Catalyzes the first intracellular reaction of sulfate assimilation, forming adenosine-5'-phosphosulfate (APS) from inorganic sulfate and ATP. Plays an important role in sulfate activation as a component of the biosynthesis pathway of sulfur-containing amino acids. The protein is Sulfate adenylyltransferase of Aspergillus terreus.